We begin with the raw amino-acid sequence, 321 residues long: Thioredoxin reductase (321 aa).

FAD-binding positions include 11–14 (SGPA), 40–41 (TA), glutamine 45, asparagine 54, cysteine 145, aspartate 288, and 295–297 (RQA). The cysteines at positions 142 and 145 are disulfide-linked.

The protein belongs to the class-II pyridine nucleotide-disulfide oxidoreductase family. In terms of assembly, homodimer. FAD is required as a cofactor.

It is found in the cytoplasm. The catalysed reaction is [thioredoxin]-dithiol + NADP(+) = [thioredoxin]-disulfide + NADPH + H(+). The chain is Thioredoxin reductase (TRR1) from Debaryomyces hansenii (strain ATCC 36239 / CBS 767 / BCRC 21394 / JCM 1990 / NBRC 0083 / IGC 2968) (Yeast).